The primary structure comprises 481 residues: Drebrin-like protein (481 aa).

Residues serine 3–asparagine 131 enclose the ADF-H domain. Positions tyrosine 217 to lysine 227 are enriched in basic and acidic residues. The tract at residues tyrosine 217 to glycine 423 is disordered. Low complexity predominate over residues glutamine 228 to alanine 237. The span at threonine 248 to threonine 261 shows a compositional bias: polar residues. The segment covering proline 291–proline 300 has biased composition (pro residues). The span at glutamine 325–glutamine 335 shows a compositional bias: acidic residues. Residues glutamine 336–glutamine 413 show a composition bias toward low complexity. Residues serine 422–leucine 481 enclose the SH3 domain.

It belongs to the ABP1 family.

The protein localises to the cytoplasm. It localises to the cytoskeleton. It is found in the cell projection. The protein resides in the pseudopodium. In terms of biological role, actin-binding adapter protein. Binds to F-actin but is not involved in actin polymerization, capping or bundling. Does not bind G-actin. Controls pseudopodium number and motility in early stages of chemotactic aggregation. This is Drebrin-like protein (abpE-1) from Dictyostelium discoideum (Social amoeba).